Here is a 1230-residue protein sequence, read N- to C-terminus: ATP-dependent helicase/nuclease subunit A (1230 aa).

A UvrD-like helicase ATP-binding domain is found at 4–480; the sequence is RNWTGPQEAA…IDLSHNFRSR (477 aa). 25 to 32 is a binding site for ATP; sequence AGAGSGKT. Residues 517 to 799 enclose the UvrD-like helicase C-terminal domain; the sequence is AQLEGSGPPV…RIMSIHQAKG (283 aa). The interval 535-554 is disordered; it reads TSVGRDTAGTADDEPDRSDE. The segment covering 545 to 554 has biased composition (acidic residues); sequence ADDEPDRSDE.

The protein belongs to the helicase family. AddA subfamily. Heterodimer of AddA and AddB/RexB. It depends on Mg(2+) as a cofactor.

It carries out the reaction Couples ATP hydrolysis with the unwinding of duplex DNA by translocating in the 3'-5' direction.. The catalysed reaction is ATP + H2O = ADP + phosphate + H(+). Functionally, the heterodimer acts as both an ATP-dependent DNA helicase and an ATP-dependent, dual-direction single-stranded exonuclease. Recognizes the chi site generating a DNA molecule suitable for the initiation of homologous recombination. The AddA nuclease domain is required for chi fragment generation; this subunit has the helicase and 3' -&gt; 5' nuclease activities. In Desulforudis audaxviator (strain MP104C), this protein is ATP-dependent helicase/nuclease subunit A.